The primary structure comprises 409 residues: Phosphatidylserine decarboxylase proenzyme, mitochondrial (409 aa).

The transit peptide at 1 to 52 (MATSVGHRCLGLLHGVAPWRSSLHPCEITALSQSLQPLRKLPFRAFRTDARK) directs the protein to the mitochondrion. Residues 36-103 (QPLRKLPFRA…LGLEIPPKLA (68 aa)) are necessary for localization to both lipid droplets and mitochondria. The Mitochondrial matrix portion of the chain corresponds to 53 to 63 (IHTAPARTMFL). A helical membrane pass occupies residues 64–82 (LRPLPILLVTGGGYAGYRQ). The Mitochondrial intermembrane segment spans residues 83 to 409 (YEKYRERELE…IRFGEALGSL (327 aa)). Catalysis depends on charge relay system; for autoendoproteolytic cleavage activity residues Asp191, His267, and Ser378. Ser378 functions as the Schiff-base intermediate with substrate; via pyruvic acid; for decarboxylase activity in the catalytic mechanism. Pyruvic acid (Ser); by autocatalysis is present on Ser378.

Belongs to the phosphatidylserine decarboxylase family. PSD-B subfamily. Eukaryotic type I sub-subfamily. In terms of assembly, heterodimer of a large membrane-associated beta subunit and a small pyruvoyl-containing alpha subunit. Requires pyruvate as cofactor. In terms of processing, is synthesized initially as an inactive proenzyme. Formation of the active enzyme involves a self-maturation process in which the active site pyruvoyl group is generated from an internal serine residue via an autocatalytic post-translational modification. Two non-identical subunits are generated from the proenzyme in this reaction, and the pyruvate is formed at the N-terminus of the alpha chain, which is derived from the carboxyl end of the proenzyme. The autoendoproteolytic cleavage occurs by a canonical serine protease mechanism, in which the side chain hydroxyl group of the serine supplies its oxygen atom to form the C-terminus of the beta chain, while the remainder of the serine residue undergoes an oxidative deamination to produce ammonia and the pyruvoyl prosthetic group on the alpha chain. During this reaction, the Ser that is part of the protease active site of the proenzyme becomes the pyruvoyl prosthetic group, which constitutes an essential element of the active site of the mature decarboxylase.

The protein localises to the mitochondrion inner membrane. It localises to the cytoplasm. The protein resides in the lipid droplet. It catalyses the reaction a 1,2-diacyl-sn-glycero-3-phospho-L-serine + H(+) = a 1,2-diacyl-sn-glycero-3-phosphoethanolamine + CO2. The protein operates within phospholipid metabolism; phosphatidylethanolamine biosynthesis. Catalyzes the formation of phosphatidylethanolamine (PtdEtn) from phosphatidylserine (PtdSer). Plays a central role in phospholipid metabolism and in the interorganelle trafficking of phosphatidylserine. May be involved in lipid droplet biogenesis at the endoplasmic reticulum membrane. The sequence is that of Phosphatidylserine decarboxylase proenzyme, mitochondrial from Homo sapiens (Human).